The chain runs to 338 residues: Ketol-acid reductoisomerase (NADP(+)) (338 aa).

The KARI N-terminal Rossmann domain occupies 1-181 (MKVSYDKDCD…GGGRTGIIET (181 aa)). NADP(+) contacts are provided by residues 24–27 (YGSQ), Arg-47, Ser-50, Ser-52, and 82–85 (DEFQ). His-107 is an active-site residue. Gly-133 contacts NADP(+). The 146-residue stretch at 182-327 (TFKDETETDL…EKLRAMMPWI (146 aa)) folds into the KARI C-terminal knotted domain. Positions 190, 194, 226, and 230 each coordinate Mg(2+). Ser-251 is a substrate binding site.

Belongs to the ketol-acid reductoisomerase family. Mg(2+) serves as cofactor.

The enzyme catalyses (2R)-2,3-dihydroxy-3-methylbutanoate + NADP(+) = (2S)-2-acetolactate + NADPH + H(+). It catalyses the reaction (2R,3R)-2,3-dihydroxy-3-methylpentanoate + NADP(+) = (S)-2-ethyl-2-hydroxy-3-oxobutanoate + NADPH + H(+). Its pathway is amino-acid biosynthesis; L-isoleucine biosynthesis; L-isoleucine from 2-oxobutanoate: step 2/4. The protein operates within amino-acid biosynthesis; L-valine biosynthesis; L-valine from pyruvate: step 2/4. In terms of biological role, involved in the biosynthesis of branched-chain amino acids (BCAA). Catalyzes an alkyl-migration followed by a ketol-acid reduction of (S)-2-acetolactate (S2AL) to yield (R)-2,3-dihydroxy-isovalerate. In the isomerase reaction, S2AL is rearranged via a Mg-dependent methyl migration to produce 3-hydroxy-3-methyl-2-ketobutyrate (HMKB). In the reductase reaction, this 2-ketoacid undergoes a metal-dependent reduction by NADPH to yield (R)-2,3-dihydroxy-isovalerate. This Stutzerimonas stutzeri (strain A1501) (Pseudomonas stutzeri) protein is Ketol-acid reductoisomerase (NADP(+)).